The chain runs to 137 residues: Proofreading thioesterase EntH (137 aa).

Glutamate 63 (nucleophile or proton acceptor) is an active-site residue.

This sequence belongs to the thioesterase PaaI family. Homotetramer. Dimer of dimers. Interacts specifically with the aryl carrier protein (ArCP) domain of EntB.

It is found in the cytoplasm. It participates in siderophore biosynthesis; enterobactin biosynthesis. Required for optimal enterobactin synthesis. Acts as a proofreading enzyme that prevents EntB misacylation by hydrolyzing the thioester bound existing between EntB and wrongly charged molecules. The polypeptide is Proofreading thioesterase EntH (Salmonella paratyphi A (strain AKU_12601)).